Reading from the N-terminus, the 394-residue chain is MSKEKFERTKPHVNVGTIGHVDHGKTTLTAAITTVLAKTYGGSARAFDQIDNAPEEKARGITINTSHVEYDTPTRHYAHVDCPGHADYVKNMITGAAQMDGAILVVAATDGPMPQTREHILLGRQVGVPFIIVFMNKCDMVDDEELLELVEMEVRELLSAYDFPGDDLPVVRGSALKALEGEAEWEAKIIELAGYLDSYIPEPERAIDKPFLLPIEDVFSISGRGTVVTGRVERGIVKVGEEVEIVGIKDTVKSTCTGVEMFRKLLDEGRAGENVGVLLRGIKREDIERGQVLAKPGSIKPHTQFDSEVYILSKDEGGRHTPFFKGYRPQFYFRTTDVTGTIELPEGVEMVMPGDNVNMKVTLIHPIAMDDGLRFAIREGGRTVGAGVVAKVIA.

A tr-type G domain is found at 10–204 (KPHVNVGTIG…YLDSYIPEPE (195 aa)). Residues 19–26 (GHVDHGKT) are G1. A GTP-binding site is contributed by 19 to 26 (GHVDHGKT). Thr26 contacts Mg(2+). Residues 60-64 (GITIN) are G2. A G3 region spans residues 81 to 84 (DCPG). GTP-binding positions include 81–85 (DCPGH) and 136–139 (NKCD). A G4 region spans residues 136 to 139 (NKCD). Residues 174-176 (SAL) are G5.

Belongs to the TRAFAC class translation factor GTPase superfamily. Classic translation factor GTPase family. EF-Tu/EF-1A subfamily. As to quaternary structure, monomer.

The protein resides in the cytoplasm. The catalysed reaction is GTP + H2O = GDP + phosphate + H(+). GTP hydrolase that promotes the GTP-dependent binding of aminoacyl-tRNA to the A-site of ribosomes during protein biosynthesis. This Serratia proteamaculans (strain 568) protein is Elongation factor Tu 1.